We begin with the raw amino-acid sequence, 504 residues long: Galactose/methyl galactoside import ATP-binding protein MglA (504 aa).

ABC transporter domains follow at residues 8-247 (LEMN…VGRD) and 258-504 (TPGE…TRFI). 40-47 (GENGAGKS) lines the ATP pocket.

Belongs to the ABC transporter superfamily. Galactose/methyl galactoside importer (TC 3.A.1.2.3) family. The complex is composed of one ATP-binding protein (MglA), two transmembrane proteins (MglC) and a solute-binding protein (MglB).

The protein localises to the cell membrane. The catalysed reaction is D-galactose(out) + ATP + H2O = D-galactose(in) + ADP + phosphate + H(+). The enzyme catalyses methyl beta-D-galactoside(out) + ATP + H2O = methyl beta-D-galactoside(in) + ADP + phosphate + H(+). Part of the ABC transporter complex MglABC involved in galactose/methyl galactoside import. Responsible for energy coupling to the transport system. The sequence is that of Galactose/methyl galactoside import ATP-binding protein MglA from Clostridium tetani (strain Massachusetts / E88).